A 74-amino-acid polypeptide reads, in one-letter code: Protein RALF-like 25 (74 aa).

The signal sequence occupies residues Met-1–Ala-22. Disulfide bonds link Cys-35–Cys-44 and Cys-62–Cys-68.

The protein belongs to the plant rapid alkalinization factor (RALF) family.

The protein localises to the secreted. Functionally, cell signaling peptide that may regulate plant stress, growth, and development. Mediates a rapid alkalinization of extracellular space by mediating a transient increase in the cytoplasmic Ca(2+) concentration leading to a calcium-dependent signaling events through a cell surface receptor and a concomitant activation of some intracellular mitogen-activated protein kinases. This Arabidopsis thaliana (Mouse-ear cress) protein is Protein RALF-like 25 (RALFL25).